The primary structure comprises 719 residues: Leucine-rich repeat and fibronectin type-III domain-containing protein 5 (719 aa).

The signal sequence occupies residues 1 to 17 (MEKILFYLFLIGIAVKA). The LRRNT domain occupies 18–51 (QICPKRCVCQILSPNLATLCAKKGLLFVPPNIDR). The Extracellular portion of the chain corresponds to 18–529 (QICPKRCVCQ…MQSQFLGGTM (512 aa)). LRR repeat units follow at residues 52-73 (RTVE…DFAN), 76-97 (SLVD…AFAD), 100-121 (NLRA…MFSG), 124-145 (NLHH…AFDD), 148-169 (ALEE…AVEK), 172-193 (SLHT…TFSH), and 196-217 (KMTR…PLFQ). A glycan (N-linked (GlcNAc...) asparagine) is linked at asparagine 73. The LRRCT domain maps to 240–286 (NPLHCNCELLWLRRLSREDDLETCASPPLLTGRYFWSIPEEEFLCEP). The Ig-like domain maps to 287 to 373 (PLITRHTHEM…GEATQIVDLH (87 aa)). The cysteines at positions 308 and 357 are disulfide-linked. Residues asparagine 330, asparagine 339, asparagine 382, asparagine 406, and asparagine 452 are each glycosylated (N-linked (GlcNAc...) asparagine). Residues 385 to 414 (NHIHEPDPGSSDISTSTKSGSNTSSSNGDT) are disordered. The segment covering 393–414 (GSSDISTSTKSGSNTSSSNGDT) has biased composition (low complexity). In terms of domain architecture, Fibronectin type-III spans 414–503 (TKLSQDKIVV…ITSLTATRVV (90 aa)). A helical membrane pass occupies residues 530–550 (IIIIGGIIVASVLVFIIILMI). Topologically, residues 551-719 (RYKVCNNNGQ…VQETQRLELI (169 aa)) are cytoplasmic. The span at 615–627 (ETCSSQDSSTTTS) shows a compositional bias: low complexity. The tract at residues 615–694 (ETCSSQDSST…SVTEGPTSKR (80 aa)) is disordered. Polar residues-rich tracts occupy residues 628–641 (ALPP…SVSQ) and 649–677 (TKPS…TALQ).

The protein belongs to the LRFN family. As to quaternary structure, can form heteromeric complexes with LRFN1, LRFN2, LRFN3 and LFRN4. Able to form homomeric complexes across cell junctions, between adjacent cells. Does not interact with DLG1, DLG2, DLG3 and DLG4.

The protein localises to the membrane. Cell adhesion molecule that mediates homophilic cell-cell adhesion in a Ca(2+)-independent manner. Promotes neurite outgrowth in hippocampal neurons. The protein is Leucine-rich repeat and fibronectin type-III domain-containing protein 5 (LRFN5) of Homo sapiens (Human).